The primary structure comprises 234 residues: Uridylate kinase (234 aa).

Gly-10 to Ser-11 contacts ATP. UMP is bound at residue Gly-44. ATP contacts are provided by Gly-45 and Arg-49. Residues Asp-66 and Ile-114–Thr-120 each bind UMP. Residues Thr-140, Tyr-146, and Asp-149 each coordinate ATP.

The protein belongs to the UMP kinase family. As to quaternary structure, homohexamer.

It localises to the cytoplasm. It catalyses the reaction UMP + ATP = UDP + ADP. Its pathway is pyrimidine metabolism; CTP biosynthesis via de novo pathway; UDP from UMP (UMPK route): step 1/1. With respect to regulation, inhibited by UTP. Its function is as follows. Catalyzes the reversible phosphorylation of UMP to UDP. The sequence is that of Uridylate kinase from Methanoregula boonei (strain DSM 21154 / JCM 14090 / 6A8).